Consider the following 111-residue polypeptide: UPF0060 membrane protein HCH_03337 (111 aa).

A run of 4 helical transmembrane segments spans residues 8–28 (LLFAVTAITEIVGCYLPWLVI), 33–53 (SLWLLVPAALSLAIFAWLLTL), 65–85 (YGGMYVVVALIWLHFVEGVGL), and 88–108 (FDFLGATMALAGMAIIALQPI).

It belongs to the UPF0060 family.

The protein resides in the cell inner membrane. In Hahella chejuensis (strain KCTC 2396), this protein is UPF0060 membrane protein HCH_03337.